We begin with the raw amino-acid sequence, 430 residues long: Adenylosuccinate synthetase (430 aa).

Residues 12–18 (GDEGKGK) and 40–42 (GHT) each bind GTP. D13 acts as the Proton acceptor in catalysis. Mg(2+) contacts are provided by D13 and G40. IMP is bound by residues 13–16 (DEGK), 38–41 (NAGH), T130, R144, Q224, T239, and R303. H41 (proton donor) is an active-site residue. Substrate is bound at residue 299-305 (TVTGRKR). GTP contacts are provided by residues R305, 331 to 333 (KLD), and 413 to 415 (STS).

This sequence belongs to the adenylosuccinate synthetase family. As to quaternary structure, homodimer. Mg(2+) serves as cofactor.

Its subcellular location is the cytoplasm. It carries out the reaction IMP + L-aspartate + GTP = N(6)-(1,2-dicarboxyethyl)-AMP + GDP + phosphate + 2 H(+). Its pathway is purine metabolism; AMP biosynthesis via de novo pathway; AMP from IMP: step 1/2. Functionally, plays an important role in the de novo pathway of purine nucleotide biosynthesis. Catalyzes the first committed step in the biosynthesis of AMP from IMP. The protein is Adenylosuccinate synthetase of Paracoccus denitrificans (strain Pd 1222).